The chain runs to 342 residues: CMP-N-acetylneuraminate-beta-galactosamide-alpha-2,3-sialyltransferase 1 (342 aa).

The Cytoplasmic portion of the chain corresponds to 1–10 (MVTVRKRNVK). Residues 11 to 28 (VFTFAFVLITVTSFLLNY) form a helical; Signal-anchor for type II membrane protein membrane-spanning segment. Topologically, residues 29–342 (KHQVTMTTWD…IEKIKFFKGR (314 aa)) are lumenal. 3 cysteine pairs are disulfide-bonded: Cys-61/Cys-66, Cys-63/Cys-141, and Cys-144/Cys-283. Asn-81 carries an N-linked (GlcNAc...) asparagine glycan. Gln-107 is a substrate binding site. N-linked (GlcNAc...) asparagine glycosylation occurs at Asn-116. 2 residues coordinate substrate: Asn-149 and Asn-172. Residues Asn-203 and Asn-229 are each glycosylated (N-linked (GlcNAc...) asparagine). Substrate is bound by residues Tyr-232, Tyr-268, Gly-272, Gly-292, and His-301. Asn-306 carries N-linked (GlcNAc...) asparagine glycosylation. Substrate is bound at residue His-318. N-linked (GlcNAc...) asparagine glycosylation is present at Asn-325.

Belongs to the glycosyltransferase 29 family. Post-translationally, the soluble form derives from the membrane form by proteolytic processing.

Its subcellular location is the golgi apparatus. It is found in the golgi stack membrane. It localises to the secreted. It catalyses the reaction a beta-D-galactosyl-(1-&gt;3)-N-acetyl-alpha-D-galactosaminyl derivative + CMP-N-acetyl-beta-neuraminate = an N-acetyl-alpha-neuraminyl-(2-&gt;3)-beta-D-galactosyl-(1-&gt;3)-N-acetyl-alpha-D-galactosaminyl derivative + CMP + H(+). It functions in the pathway protein modification; protein glycosylation. Its function is as follows. Responsible for the synthesis of the sequence NeuAc-alpha-2,3-Gal-beta-1,3-GalNAc- found on sugar chains O-linked to Thr or Ser and also as a terminal sequence on certain gangliosides. SIAT4A and SIAT4B sialylate the same acceptor substrates but exhibit different Km values. The protein is CMP-N-acetylneuraminate-beta-galactosamide-alpha-2,3-sialyltransferase 1 (ST3GAL1) of Gallus gallus (Chicken).